Consider the following 170-residue polypeptide: NADH-quinone oxidoreductase subunit B (170 aa).

[4Fe-4S] cluster-binding residues include Cys-37, Cys-38, Cys-102, and Cys-131.

Belongs to the complex I 20 kDa subunit family. NDH-1 is composed of 14 different subunits. Subunits NuoB, C, D, E, F, and G constitute the peripheral sector of the complex. Requires [4Fe-4S] cluster as cofactor.

It localises to the cell inner membrane. The enzyme catalyses a quinone + NADH + 5 H(+)(in) = a quinol + NAD(+) + 4 H(+)(out). Its function is as follows. NDH-1 shuttles electrons from NADH, via FMN and iron-sulfur (Fe-S) centers, to quinones in the respiratory chain. The immediate electron acceptor for the enzyme in this species is believed to be ubiquinone. Couples the redox reaction to proton translocation (for every two electrons transferred, four hydrogen ions are translocated across the cytoplasmic membrane), and thus conserves the redox energy in a proton gradient. The polypeptide is NADH-quinone oxidoreductase subunit B (Geobacter metallireducens (strain ATCC 53774 / DSM 7210 / GS-15)).